The sequence spans 149 residues: SsrA-binding protein (149 aa).

Residues 123-149 (KQFDKRETEKQRDWQREKARIMKGGKE) are disordered.

Belongs to the SmpB family.

The protein resides in the cytoplasm. Its function is as follows. Required for rescue of stalled ribosomes mediated by trans-translation. Binds to transfer-messenger RNA (tmRNA), required for stable association of tmRNA with ribosomes. tmRNA and SmpB together mimic tRNA shape, replacing the anticodon stem-loop with SmpB. tmRNA is encoded by the ssrA gene; the 2 termini fold to resemble tRNA(Ala) and it encodes a 'tag peptide', a short internal open reading frame. During trans-translation Ala-aminoacylated tmRNA acts like a tRNA, entering the A-site of stalled ribosomes, displacing the stalled mRNA. The ribosome then switches to translate the ORF on the tmRNA; the nascent peptide is terminated with the 'tag peptide' encoded by the tmRNA and targeted for degradation. The ribosome is freed to recommence translation, which seems to be the essential function of trans-translation. In Cupriavidus taiwanensis (strain DSM 17343 / BCRC 17206 / CCUG 44338 / CIP 107171 / LMG 19424 / R1) (Ralstonia taiwanensis (strain LMG 19424)), this protein is SsrA-binding protein.